An 834-amino-acid chain; its full sequence is Protein EFR3 homolog cmp44E (834 aa).

One copy of the HEAT repeat lies at 120 to 156 (NLFVESFLRMVQKLLEDSNPNLKIMATNSFVKFANIN). The chain crosses the membrane as a helical span at residues 595 to 612 (LHAISIGLLVLISRVSGI).

The protein belongs to the EFR3 family. In terms of tissue distribution, expression during embryogenesis is ubiquitous with notably higher levels in the CNS and brain.

It is found in the membrane. Functionally, an essential gene required for embryogenesis; required for cell viability. The chain is Protein EFR3 homolog cmp44E (stmA) from Drosophila melanogaster (Fruit fly).